Here is a 192-residue protein sequence, read N- to C-terminus: 7-methyl-GTP pyrophosphatase (192 aa).

Residue Asp70 is the Proton acceptor of the active site.

This sequence belongs to the Maf family. YceF subfamily. It depends on a divalent metal cation as a cofactor.

Its subcellular location is the cytoplasm. It carries out the reaction N(7)-methyl-GTP + H2O = N(7)-methyl-GMP + diphosphate + H(+). In terms of biological role, nucleoside triphosphate pyrophosphatase that hydrolyzes 7-methyl-GTP (m(7)GTP). May have a dual role in cell division arrest and in preventing the incorporation of modified nucleotides into cellular nucleic acids. The chain is 7-methyl-GTP pyrophosphatase from Xanthomonas campestris pv. campestris (strain 8004).